The primary structure comprises 763 residues: Phospholipid phosphatase-related protein type 4 (763 aa).

The interval 33–54 (VHTSPGGGRRPGQAAGMSAKER) is disordered. A Phosphoserine modification is found at S36. 3 helical membrane-spanning segments follow: residues 67–87 (LPCFYFVELPILASSVVSLYF), 119–139 (AIPFLMLLSLAFAGPAITIMV), and 178–198 (FVGVHVFGLCSTALITDIIQL). 2 N-linked (GlcNAc...) asparagine glycosylation sites follow: N214 and N219. Residues 247–267 (SFPSQHATLAAFAAVYVSMYF) form a helical membrane-spanning segment. N268 carries N-linked (GlcNAc...) asparagine glycosylation. Transmembrane regions (helical) follow at residues 276 to 296 (KLLKPLLVFTFIICGIICGLT) and 308 to 328 (VYCGFLIGGGIALYLGLYAVG). Phosphoserine is present on S346. N-linked (GlcNAc...) asparagine glycosylation is present at N362. S385 bears the Phosphoserine mark. N-linked (GlcNAc...) asparagine glycosylation occurs at N432. S438 bears the Phosphoserine mark. Residue N455 is glycosylated (N-linked (GlcNAc...) asparagine). Residues 458-529 (RKLSLQVIEP…PRVSIQSRPG (72 aa)) form a disordered region. 2 positions are modified to phosphoserine: S461 and S472. N513, N543, and N568 each carry an N-linked (GlcNAc...) asparagine glycan. The residue at position 606 (S606) is a Phosphoserine. Over residues 669–694 (DSESCESLKDSFGSGDRKRSNIDSNE) the composition is skewed to basic and acidic residues. Disordered stretches follow at residues 669 to 698 (DSESCESLKDSFGSGDRKRSNIDSNEHHHH) and 739 to 763 (ERSNSPENTRNIFYKGTSPTRAYKD). Residues 740–749 (RSNSPENTRN) are compositionally biased toward polar residues.

Belongs to the PA-phosphatase related phosphoesterase family. In terms of processing, O-glycosylated. Probably at Ser-346. Expressed by glutamatergic neurons (at protein level).

The protein resides in the postsynaptic density membrane. In terms of biological role, postsynaptic density membrane protein that indirectly regulates glutamatergic synaptic transmission through lysophosphatidic acid (LPA)-mediated signaling pathways. Binds lysophosphatidic acid (LPA) and mediates its internalization into cells. Could act as receptor or a transporter of this lipid at the post-synaptic membrane. Modulates lysophosphatidic acid (LPA) activity in neuron axonal outgrowth during development by attenuating phospholipid-induced axon collapse. In Homo sapiens (Human), this protein is Phospholipid phosphatase-related protein type 4.